The sequence spans 468 residues: Glutamine synthetase (468 aa).

The 86-residue stretch at 11–96 folds into the GS beta-grasp domain; sequence HDVKWIDLRF…LVCDIIEPST (86 aa). Residues 104–468 form the GS catalytic domain; that stretch reads PRAIAHRAEE…PLEYELYYSC (365 aa). Residues E129 and E131 each coordinate Mg(2+). E207 provides a ligand contact to ATP. Mg(2+)-binding residues include E212 and E220. L-glutamate contacts are provided by residues 264–265 and G265; that span reads NG. H269 is a binding site for Mg(2+). ATP-binding positions include 271-273 and S273; that span reads HMS. L-glutamate-binding residues include R321, E327, and R339. The ATP site is built by R339, R344, and R352. E357 contributes to the Mg(2+) binding site. R359 serves as a coordination point for L-glutamate. Residue Y397 is modified to O-AMP-tyrosine.

Belongs to the glutamine synthetase family. As to quaternary structure, oligomer of 12 subunits arranged in the form of two hexagons. Mg(2+) is required as a cofactor. The cofactor is Mn(2+).

It carries out the reaction L-glutamate + NH4(+) + ATP = L-glutamine + ADP + phosphate + H(+). With respect to regulation, when cellular nitrogen levels are high, the C-terminal adenylyl transferase (AT) of GlnE inhibits GlnA by covalent transfer of an adenylyl group from ATP to Tyr-397. Conversely, when nitrogen levels are low, the N-terminal adenylyl removase (AR) of GlnE activates GlnA by removing the adenylyl group by phosphorolysis. The fully adenylated enzyme complex is inactive. Functionally, catalyzes the formation of glutamine from glutamate and ammonia. In vitro, can also use hydroxylamine, methylamine and ethylamine, with 32%, 7% and 1% activity compared to ammonia, respectively. This is Glutamine synthetase from Pseudomonas taetrolens.